Reading from the N-terminus, the 273-residue chain is Putative pyruvate, phosphate dikinase regulatory protein (273 aa).

153–160 (GVSRTSKT) is a binding site for ADP.

Belongs to the pyruvate, phosphate/water dikinase regulatory protein family. PDRP subfamily.

It carries out the reaction N(tele)-phospho-L-histidyl/L-threonyl-[pyruvate, phosphate dikinase] + ADP = N(tele)-phospho-L-histidyl/O-phospho-L-threonyl-[pyruvate, phosphate dikinase] + AMP + H(+). The enzyme catalyses N(tele)-phospho-L-histidyl/O-phospho-L-threonyl-[pyruvate, phosphate dikinase] + phosphate + H(+) = N(tele)-phospho-L-histidyl/L-threonyl-[pyruvate, phosphate dikinase] + diphosphate. Its function is as follows. Bifunctional serine/threonine kinase and phosphorylase involved in the regulation of the pyruvate, phosphate dikinase (PPDK) by catalyzing its phosphorylation/dephosphorylation. This Sinorhizobium fredii (strain NBRC 101917 / NGR234) protein is Putative pyruvate, phosphate dikinase regulatory protein.